A 423-amino-acid polypeptide reads, in one-letter code: Serine--tRNA ligase (423 aa).

230-232 (TAE) is an L-serine binding site. 261–263 (RAE) contacts ATP. Glutamate 284 serves as a coordination point for L-serine. 348-351 (EISS) is an ATP binding site. Serine 384 contacts L-serine.

This sequence belongs to the class-II aminoacyl-tRNA synthetase family. Type-1 seryl-tRNA synthetase subfamily. In terms of assembly, homodimer. The tRNA molecule binds across the dimer.

The protein resides in the cytoplasm. It carries out the reaction tRNA(Ser) + L-serine + ATP = L-seryl-tRNA(Ser) + AMP + diphosphate + H(+). The catalysed reaction is tRNA(Sec) + L-serine + ATP = L-seryl-tRNA(Sec) + AMP + diphosphate + H(+). It participates in aminoacyl-tRNA biosynthesis; selenocysteinyl-tRNA(Sec) biosynthesis; L-seryl-tRNA(Sec) from L-serine and tRNA(Sec): step 1/1. In terms of biological role, catalyzes the attachment of serine to tRNA(Ser). Is also able to aminoacylate tRNA(Sec) with serine, to form the misacylated tRNA L-seryl-tRNA(Sec), which will be further converted into selenocysteinyl-tRNA(Sec). The chain is Serine--tRNA ligase from Acetivibrio thermocellus (strain ATCC 27405 / DSM 1237 / JCM 9322 / NBRC 103400 / NCIMB 10682 / NRRL B-4536 / VPI 7372) (Clostridium thermocellum).